Here is a 320-residue protein sequence, read N- to C-terminus: Protoheme IX farnesyltransferase (320 aa).

The interval 1-24 is disordered; that stretch reads MSMITERPVSDPAGQSVSATGDGA. Helical transmembrane passes span 33-55, 68-88, 117-137, 140-160, 183-203, 241-261, 262-282, and 300-320; these read AVVA…VTTV, LWLM…ASVL, NALI…AVFT, LAAG…TAWL, WAAV…VVFF, ILVF…LGAG, MGPI…VEAH, and FHWS…DALI.

The protein belongs to the UbiA prenyltransferase family. Protoheme IX farnesyltransferase subfamily.

It localises to the cell membrane. It catalyses the reaction heme b + (2E,6E)-farnesyl diphosphate + H2O = Fe(II)-heme o + diphosphate. It functions in the pathway porphyrin-containing compound metabolism; heme O biosynthesis; heme O from protoheme: step 1/1. In terms of biological role, converts heme B (protoheme IX) to heme O by substitution of the vinyl group on carbon 2 of heme B porphyrin ring with a hydroxyethyl farnesyl side group. This is Protoheme IX farnesyltransferase from Salinispora tropica (strain ATCC BAA-916 / DSM 44818 / JCM 13857 / NBRC 105044 / CNB-440).